We begin with the raw amino-acid sequence, 289 residues long: DegV domain-containing protein YteA (289 aa).

One can recognise a DegV domain in the interval 3-284 (FQIMTDSTAD…DGTIAIFSIS (282 aa)). Residues Thr-62 and Ser-94 each coordinate hexadecanoate.

Functionally, may bind long-chain fatty acids, such as palmitate, and may play a role in lipid transport or fatty acid metabolism. The protein is DegV domain-containing protein YteA (yteA) of Lactococcus lactis subsp. lactis (strain IL1403) (Streptococcus lactis).